Reading from the N-terminus, the 804-residue chain is Probable replication endonuclease from prophage-like region 1 (804 aa).

Residues Y498 and Y502 each act as O-(5'-phospho-DNA)-tyrosine intermediate in the active site.

This sequence belongs to the phage GPA family.

Functionally, possible endonuclease which induces a single-strand cut and initiates DNA replication. In Salmonella typhi, this protein is Probable replication endonuclease from prophage-like region 1.